The following is a 49-amino-acid chain: Small ribosomal subunit protein uS14B (49 aa).

It belongs to the universal ribosomal protein uS14 family. Zinc-binding uS14 subfamily. As to quaternary structure, part of the 30S ribosomal subunit.

Binds 16S rRNA, required for the assembly of 30S particles. The chain is Small ribosomal subunit protein uS14B from Natronomonas pharaonis (strain ATCC 35678 / DSM 2160 / CIP 103997 / JCM 8858 / NBRC 14720 / NCIMB 2260 / Gabara) (Halobacterium pharaonis).